Reading from the N-terminus, the 940-residue chain is Gamma-aminobutyric acid type B receptor subunit 2 (940 aa).

A signal peptide spans 1–40 (MASPPSSGQPRPPPPPPPPARLLLPLLLSLLLSLAPGAWG). Residues 41 to 482 (WARGAPRPPP…LRKISLPLYS (442 aa)) are Extracellular-facing. N-linked (GlcNAc...) asparagine glycosylation occurs at N89. Disulfide bonds link C107–C134, C236–C265, and C264–C301. 4 N-linked (GlcNAc...) asparagine glycosylation sites follow: N297, N388, N403, and N452. Residues 483 to 503 (ILSALTILGMIMASAFLFFNI) form a helical membrane-spanning segment. Residues 504–521 (KNRNQKLIKMSSPYMNNL) are Cytoplasmic-facing. Residues 522 to 542 (IILGGMLSYASIFLFGLDGSF) form a helical membrane-spanning segment. Over 543–550 (VSEKTFET) the chain is Extracellular. Residues 551 to 571 (LCTVRTWILTVGYTTAFGAMF) traverse the membrane as a helical segment. Residues 572–596 (AKTWRVHAIFKNVKMKKKIIKDQKL) are Cytoplasmic-facing. The helical transmembrane segment at 597-617 (LVIVGGMLLIDLCILICWQAV) threads the bilayer. The Extracellular portion of the chain corresponds to 618–653 (DPLRRTVERYSMEPDPAGRDISIRPLLEHCENTHMT). The chain crosses the membrane as a helical span at residues 654-674 (IWLGIVYAYKGLLMLFGCFLA). Residues 675-690 (WETRNVSIPALNDSKY) are Cytoplasmic-facing. The helical transmembrane segment at 691 to 711 (IGMSVYNVGIMCIIGAAVSFL) threads the bilayer. Over 712–719 (TRDQPNVQ) the chain is Extracellular. The chain crosses the membrane as a helical span at residues 720-740 (FCIVALVIIFCSTITLCLVFV). Residues 741-940 (PKLITLRTNP…PSFRVMVSGL (200 aa)) are Cytoplasmic-facing. Residues 762–789 (TQNQKKEDSKTSTSVTSVNQASTSRLEG) form a disordered region. Positions 772–786 (TSTSVTSVNQASTSR) are enriched in polar residues. Phosphoserine occurs at positions 775 and 778. Positions 781–818 (QASTSRLEGLQSENHRLRMKITELDKDLEEVTMQLQDT) form a coiled coil. T818 carries the phosphothreonine modification. 6 positions are modified to phosphoserine: S883, S892, S912, S915, S919, and S923.

Belongs to the G-protein coupled receptor 3 family. GABA-B receptor subfamily. Heterodimer of GABBR1 and GABBR2. Homodimers may form, but are inactive. Interacts (via C-terminus) with ATF4 (via leucine zipper domain).

The protein localises to the cell membrane. The protein resides in the postsynaptic cell membrane. Its function is as follows. Component of a heterodimeric G-protein coupled receptor for GABA, formed by GABBR1 and GABBR2. Within the heterodimeric GABA receptor, only GABBR1 seems to bind agonists, while GABBR2 mediates coupling to G proteins. Ligand binding causes a conformation change that triggers signaling via guanine nucleotide-binding proteins (G proteins) and modulates the activity of down-stream effectors, such as adenylate cyclase. Signaling inhibits adenylate cyclase, stimulates phospholipase A2, activates potassium channels, inactivates voltage-dependent calcium-channels and modulates inositol phospholipid hydrolysis. Plays a critical role in the fine-tuning of inhibitory synaptic transmission. Pre-synaptic GABA receptor inhibits neurotransmitter release by down-regulating high-voltage activated calcium channels, whereas postsynaptic GABA receptor decreases neuronal excitability by activating a prominent inwardly rectifying potassium (Kir) conductance that underlies the late inhibitory postsynaptic potentials. Not only implicated in synaptic inhibition but also in hippocampal long-term potentiation, slow wave sleep, muscle relaxation and antinociception. Interacts with KCTD8, KCTD12 and KCTD16; this interaction determines the pharmacology and kinetics of the receptor response, the KCTD proteins markedly accelerating the GABA-B response, although to different extents. This Mus musculus (Mouse) protein is Gamma-aminobutyric acid type B receptor subunit 2 (Gabbr2).